The primary structure comprises 1216 residues: SPOC domain-containing protein 1 (1216 aa).

Disordered regions lie at residues 1–74 (MSQA…RAAG), 166–216 (EARD…GAHS), 236–325 (NLLS…PPQS), 348–462 (RTGS…PRLE), and 511–601 (SSPS…QQEK). A compositionally biased stretch (low complexity) spans 36-50 (PGLSPDGPGASSGPG). Over residues 177–190 (CDRRSPTLSKEEPP) the composition is skewed to basic and acidic residues. The segment covering 204–213 (RVRKKWRRQG) has biased composition (basic residues). The segment covering 266–278 (SGPGEPGGSGAGC) has biased composition (gly residues). The span at 314-325 (SLSSAAQAPPQS) shows a compositional bias: low complexity. Over residues 436–452 (RGTDRSSDNSHQDRPEE) the composition is skewed to basic and acidic residues. Residues 581–592 (EAEEDSLPEQPE) are compositionally biased toward acidic residues. Positions 608-728 (VRGTVVRSMQ…IIEQQQKEPC (121 aa)) constitute a TFIIS central domain. Residues 823-850 (QTPMPAPEMPKTRELSPTEPQDRVPPSG) are disordered. Residues 832 to 844 (PKTRELSPTEPQD) are compositionally biased toward basic and acidic residues. An SPOC domain is found at 867–970 (WEGVLDMFSI…VEHMGMVLLP (104 aa)). Residues 1046–1055 (RYYQPDDRRP) are compositionally biased toward basic and acidic residues. Disordered stretches follow at residues 1046–1140 (RYYQ…QHFH) and 1176–1216 (PRPL…PRKA).

Interacts with DNMT3A, DNMT3C and DNMT3L. Interacts with C19orf84. Interacts with SPIN1; promoting recruitment to transposons marked with histone H3 trimethylated at both 'Lys-4' and 'Lys-9' (H3K4me3K9me3).

It is found in the nucleus. Its subcellular location is the chromosome. Functionally, protein adapter that acts as an essential executor of PIWIL4-piRNA pathway directed transposon DNA methylation and silencing in the male embryonic germ cells. Recruited to young transposons, which are specifically marked with histone H3 trimethylated at both 'Lys-4' and 'Lys-9' (H3K4me3K9me3), via its association with SPIN1 chromatin reader, and associates with the de novo DNA methylation machinery and repressive chromatin remodeling complexes. Following this, PIWIL4 engages with nascent transposable element transcript to direct piRNA-directed DNA methylation. Not required for piRNA biosynthesis. The protein is SPOC domain-containing protein 1 of Homo sapiens (Human).